Consider the following 430-residue polypeptide: Putative ABC transporter periplasmic-binding protein YcjN (430 aa).

The N-terminal stretch at 1–19 is a signal peptide; sequence MIKSKIVLLSALVSCALIS.

It belongs to the bacterial solute-binding protein 1 family.

The protein resides in the periplasm. In terms of biological role, probably part of the binding-protein-dependent transport system YcjNOP. In Escherichia coli (strain K12), this protein is Putative ABC transporter periplasmic-binding protein YcjN (ycjN).